Here is a 542-residue protein sequence, read N- to C-terminus: MAIRLNHSVIPVSVKLGAPTRVSARSSLPFSVGDWRGVSTFSGARPLVLAKVKLRAESTEEDRVPIDDDDDSTDQLVDEEIVHFEERDFAGTACVPVYVMLPLGVIDMNSEVVEPEELLDQLRTLKSVNVDGVMVDCWWGIVESHTPQVYNWSGYKKLFQMIRELGLKIQVVMSFHECGGNVGDDVHIQIPEWVREIGQSNPDIYFTDSAGRRNTECLTWGIDKQRVLRGRTALEVYFDYMRSFRVEFDEFFEEKIIPEIEVGLGPCGELRYPSYPAQFGWKYPGIGEFQCYDKYLMNSLKEAAEVRGHSFWGRGPDNTETYNSTPHGTGFFRDGGDYDSYYGRFFLNWYSRVLIDHGDRVLAMANLAFEGTCIAAKLSGIHWWYKTASHAAELTAGFYNSSNRDGYGPIAAMFKKHDAALNFTCVELRTLDQHEDFPEALADPEGLVWQVLNAAWDASIPVASENALPCYDREGYNKILENAKPLTDPDGRHLSCFTYLRLNPTLMESQNFKEFERFLKRMHGEAVPDLGLAPGTQETNPE.

A chloroplast-targeting transit peptide spans 1–55; it reads MAIRLNHSVIPVSVKLGAPTRVSARSSLPFSVGDWRGVSTFSGARPLVLAKVKLR. Substrate-binding residues include aspartate 136, histidine 176, and aspartate 184. Glutamate 269 functions as the Proton donor in the catalytic mechanism. 3 residues coordinate substrate: lysine 377, histidine 382, and threonine 424. The active-site Proton acceptor is the glutamate 465. Substrate contacts are provided by residues 466 to 467 and arginine 501; that span reads NA.

The protein belongs to the glycosyl hydrolase 14 family.

It is found in the plastid. It localises to the chloroplast. The catalysed reaction is Hydrolysis of (1-&gt;4)-alpha-D-glucosidic linkages in polysaccharides so as to remove successive maltose units from the non-reducing ends of the chains.. Its activity is regulated as follows. Redox regulation; active in reducing conditions, inactive in oxidizing conditions. Functionally, low beta-amylase activity. Interacts poorly with starch or other alpha-1,4-glucan. This chain is Beta-amylase 2, chloroplastic (BAM2), found in Arabidopsis thaliana (Mouse-ear cress).